A 187-amino-acid polypeptide reads, in one-letter code: Troponin I, slow skeletal muscle (187 aa).

At proline 2 the chain carries N-acetylproline. The involved in binding TNC stretch occupies residues 2–48; the sequence is PEVERKSKITASRKLMLKSLMLAKAKECWEQEHEEREAEKVRYLSER. Serine 58 bears the Phosphoserine mark. The interval 97–118 is involved in binding TNC and actin; it reads LKLKVLDLRGKFKRPPLRRVRV.

The protein belongs to the troponin I family. As to quaternary structure, binds to actin and tropomyosin.

In terms of biological role, troponin I is the inhibitory subunit of troponin, the thin filament regulatory complex which confers calcium-sensitivity to striated muscle actomyosin ATPase activity. The protein is Troponin I, slow skeletal muscle (Tnni1) of Mus musculus (Mouse).